Consider the following 314-residue polypeptide: tRNA selenocysteine 1-associated protein 1 (314 aa).

RRM domains follow at residues N2–Y85 and F94–S173.

The protein belongs to the RRM TRSPAP family.

The protein localises to the nucleus. The protein resides in the cytoplasm. In terms of biological role, involved in the early steps of selenocysteine biosynthesis and tRNA(Sec) charging to the later steps resulting in the cotranslational incorporation of selenocysteine into selenoproteins. The chain is tRNA selenocysteine 1-associated protein 1 from Danio rerio (Zebrafish).